The chain runs to 108 residues: ATPase inhibitor, mitochondrial (108 aa).

The N-terminal 25 residues, M1 to F25, are a transit peptide targeting the mitochondrion. Residues F25–G48 are disordered. Residues S26–Q52 are N-terminal inhibitory region. Positions A69–D108 form a coiled coil. The interval H74–D106 is antiparallel alpha-helical coiled coil region. At K103 the chain carries N6-succinyllysine.

Belongs to the ATPase inhibitor family. In terms of assembly, homodimer; represents the active form and is present at a pH value below 6.5. Homotetramer; represents the inactive form and is present at a pH value above 7.0.

Its subcellular location is the mitochondrion. In terms of biological role, endogenous F(1)F(o)-ATPase inhibitor limiting ATP depletion when the mitochondrial membrane potential falls below a threshold and the F(1)F(o)-ATP synthase starts hydrolyzing ATP to pump protons out of the mitochondrial matrix. Required to avoid the consumption of cellular ATP when the F(1)F(o)-ATP synthase enzyme acts as an ATP hydrolase. Indirectly acts as a regulator of heme synthesis in erythroid tissues: regulates heme synthesis by modulating the mitochondrial pH and redox potential, allowing FECH to efficiently catalyze the incorporation of iron into protoporphyrin IX to produce heme. The chain is ATPase inhibitor, mitochondrial from Sus scrofa (Pig).